Here is a 396-residue protein sequence, read N- to C-terminus: Lipid-A-disaccharide synthase (396 aa).

The protein belongs to the LpxB family.

It carries out the reaction a lipid X + a UDP-2-N,3-O-bis[(3R)-3-hydroxyacyl]-alpha-D-glucosamine = a lipid A disaccharide + UDP + H(+). It functions in the pathway bacterial outer membrane biogenesis; LPS lipid A biosynthesis. Functionally, condensation of UDP-2,3-diacylglucosamine and 2,3-diacylglucosamine-1-phosphate to form lipid A disaccharide, a precursor of lipid A, a phosphorylated glycolipid that anchors the lipopolysaccharide to the outer membrane of the cell. The protein is Lipid-A-disaccharide synthase of Nitrobacter winogradskyi (strain ATCC 25391 / DSM 10237 / CIP 104748 / NCIMB 11846 / Nb-255).